The sequence spans 245 residues: Nodulation protein G (245 aa).

11–35 lines the NAD(+) pocket; it reads VTGASGAIGGAIARVLHAQGAIVGL. Substrate is bound at residue Ser-139. The active-site Proton acceptor is Tyr-152.

The protein belongs to the short-chain dehydrogenases/reductases (SDR) family.

Proposed to modify Nod factor fatty acyl chain. This Rhizobium meliloti (strain 1021) (Ensifer meliloti) protein is Nodulation protein G (nodG).